A 248-amino-acid chain; its full sequence is Pyridoxine 5'-phosphate synthase (248 aa).

3-amino-2-oxopropyl phosphate is bound at residue Asn12. Position 14-15 (14-15) interacts with 1-deoxy-D-xylulose 5-phosphate; that stretch reads DH. A 3-amino-2-oxopropyl phosphate-binding site is contributed by Arg23. His48 acts as the Proton acceptor in catalysis. Residues Arg50 and His55 each coordinate 1-deoxy-D-xylulose 5-phosphate. Glu75 (proton acceptor) is an active-site residue. Residue Thr105 participates in 1-deoxy-D-xylulose 5-phosphate binding. His196 acts as the Proton donor in catalysis. 3-amino-2-oxopropyl phosphate-binding positions include Gly197 and 218-219; that span reads GH.

Belongs to the PNP synthase family. In terms of assembly, homooctamer; tetramer of dimers.

Its subcellular location is the cytoplasm. It carries out the reaction 3-amino-2-oxopropyl phosphate + 1-deoxy-D-xylulose 5-phosphate = pyridoxine 5'-phosphate + phosphate + 2 H2O + H(+). It functions in the pathway cofactor biosynthesis; pyridoxine 5'-phosphate biosynthesis; pyridoxine 5'-phosphate from D-erythrose 4-phosphate: step 5/5. Functionally, catalyzes the complicated ring closure reaction between the two acyclic compounds 1-deoxy-D-xylulose-5-phosphate (DXP) and 3-amino-2-oxopropyl phosphate (1-amino-acetone-3-phosphate or AAP) to form pyridoxine 5'-phosphate (PNP) and inorganic phosphate. In Pseudomonas paraeruginosa (strain DSM 24068 / PA7) (Pseudomonas aeruginosa (strain PA7)), this protein is Pyridoxine 5'-phosphate synthase.